The primary structure comprises 363 residues: dTDP-L-rhamnose 4-epimerase (363 aa).

Residues 18-24 (GGAGFIG), 68-69 (DV), and 90-94 (LAAET) contribute to the NAD(+) site. Residues S136 and Y191 each contribute to the substrate site. The NAD(+) site is built by Y191 and K195. Y191 acts as the Proton acceptor in catalysis. Substrate is bound by residues N220 and R259.

Belongs to the NAD(P)-dependent epimerase/dehydratase family. NAD(+) is required as a cofactor.

It carries out the reaction dTDP-6-deoxy-beta-L-talose = dTDP-beta-L-rhamnose. Its pathway is bacterial outer membrane biogenesis; LPS O-antigen biosynthesis. Catalyzes the interconvertion of dTDP-6-deoxy-L-talose and dTDP-L-rhamnose. The equilibrium is strongly toward dTDP-L-rhamnose. The chain is dTDP-L-rhamnose 4-epimerase (wbiB) from Burkholderia thailandensis (strain ATCC 700388 / DSM 13276 / CCUG 48851 / CIP 106301 / E264).